Here is a 335-residue protein sequence, read N- to C-terminus: MQNIFNKIYESKSLNQEESYQLFKSIALGKINEIQLSSILTAMQMHGESEKEILGAIYAFSERMKFFPRPNYIFSDIVGTGGDSKNTINVSTSSAFVAASCGFKIIKHCNKGVSSKSGSSDLLNKFKINLNTSLENSKKILDKLNICFLFAPKYHSVFKYASKTRSILKIKTIFNLLGPFLNPSRPPLTLIGVYKKDLVNPMSRILKKLKYQRGIILHGDDTDEVTLHGTTYISELLNNKIYSYELEPEDFGIKRHSKSIFVEYSPEENYHIIKKTMQGKGEKLHEELIAVNVALLLKIFGHENLKENTKIALKKIRSGDVYKHIMQVSNMLKED.

5-phospho-alpha-D-ribose 1-diphosphate-binding positions include Gly79, 82 to 83 (GD), Thr87, 89 to 92 (NVST), 107 to 115 (KHCNKGVSS), and Ser119. Gly79 is a binding site for anthranilate. Ser91 provides a ligand contact to Mg(2+). An anthranilate-binding site is contributed by Asn110. Arg165 serves as a coordination point for anthranilate. Mg(2+) contacts are provided by Asp223 and Glu224.

The protein belongs to the anthranilate phosphoribosyltransferase family. Homodimer. The cofactor is Mg(2+).

It catalyses the reaction N-(5-phospho-beta-D-ribosyl)anthranilate + diphosphate = 5-phospho-alpha-D-ribose 1-diphosphate + anthranilate. The protein operates within amino-acid biosynthesis; L-tryptophan biosynthesis; L-tryptophan from chorismate: step 2/5. In terms of biological role, catalyzes the transfer of the phosphoribosyl group of 5-phosphorylribose-1-pyrophosphate (PRPP) to anthranilate to yield N-(5'-phosphoribosyl)-anthranilate (PRA). This chain is Anthranilate phosphoribosyltransferase, found in Buchnera aphidicola subsp. Schizaphis graminum (strain Sg).